The sequence spans 924 residues: LPS-assembly protein LptD (924 aa).

A signal peptide spans 1–33 (MAVKSLVFRRKFPLLVTGSLLALQPVAALTVQA). The interval 58–102 (NLPPRPAHTATSVSTAAAGSSVSGSGGETVEAEPTQRLVTESGGR) is disordered. Residues 66–90 (TATSVSTAAAGSSVSGSGGETVEAE) are compositionally biased toward low complexity.

The protein belongs to the LptD family. Component of the lipopolysaccharide transport and assembly complex. Interacts with LptE and LptA.

Its subcellular location is the cell outer membrane. Functionally, together with LptE, is involved in the assembly of lipopolysaccharide (LPS) at the surface of the outer membrane. This Pseudomonas aeruginosa (strain UCBPP-PA14) protein is LPS-assembly protein LptD.